Here is a 130-residue protein sequence, read N- to C-terminus: Methylglyoxal synthase (130 aa).

In terms of domain architecture, MGS-like spans 1–130 (MMTRPRIALI…AELSRVEAQP (130 aa)). Substrate is bound by residues histidine 12, lysine 16, 38–41 (TGTT), and 58–59 (SG). Aspartate 64 functions as the Proton donor/acceptor in the catalytic mechanism. Residue histidine 91 coordinates substrate.

It belongs to the methylglyoxal synthase family.

The enzyme catalyses dihydroxyacetone phosphate = methylglyoxal + phosphate. Its function is as follows. Catalyzes the formation of methylglyoxal from dihydroxyacetone phosphate. The polypeptide is Methylglyoxal synthase (Cupriavidus pinatubonensis (strain JMP 134 / LMG 1197) (Cupriavidus necator (strain JMP 134))).